Here is a 340-residue protein sequence, read N- to C-terminus: Phosphoribosylformylglycinamidine cyclo-ligase (340 aa).

Belongs to the AIR synthase family.

Its subcellular location is the cytoplasm. It carries out the reaction 2-formamido-N(1)-(5-O-phospho-beta-D-ribosyl)acetamidine + ATP = 5-amino-1-(5-phospho-beta-D-ribosyl)imidazole + ADP + phosphate + H(+). It participates in purine metabolism; IMP biosynthesis via de novo pathway; 5-amino-1-(5-phospho-D-ribosyl)imidazole from N(2)-formyl-N(1)-(5-phospho-D-ribosyl)glycinamide: step 2/2. This Macrococcus caseolyticus (strain JCSC5402) (Macrococcoides caseolyticum) protein is Phosphoribosylformylglycinamidine cyclo-ligase.